A 247-amino-acid chain; its full sequence is Adenosylcobinamide-GDP ribazoletransferase (247 aa).

The next 5 membrane-spanning stretches (helical) occupy residues 34-54 (IVMFPFIGLILGGISGLIFIL), 59-79 (CGIPLAALFCILALALLTGGF), 113-133 (GGLALIFVLLAKILVVSELAL), 138-158 (MLAALAAACAAGRGSAVLLMY), and 194-214 (VLLLGMQGLATMVVTLAAIFI).

It belongs to the CobS family. Mg(2+) is required as a cofactor.

The protein localises to the cell inner membrane. The catalysed reaction is alpha-ribazole + adenosylcob(III)inamide-GDP = adenosylcob(III)alamin + GMP + H(+). It catalyses the reaction alpha-ribazole 5'-phosphate + adenosylcob(III)inamide-GDP = adenosylcob(III)alamin 5'-phosphate + GMP + H(+). It functions in the pathway cofactor biosynthesis; adenosylcobalamin biosynthesis; adenosylcobalamin from cob(II)yrinate a,c-diamide: step 7/7. In terms of biological role, joins adenosylcobinamide-GDP and alpha-ribazole to generate adenosylcobalamin (Ado-cobalamin). Also synthesizes adenosylcobalamin 5'-phosphate from adenosylcobinamide-GDP and alpha-ribazole 5'-phosphate. The protein is Adenosylcobinamide-GDP ribazoletransferase of Salmonella typhi.